The chain runs to 136 residues: Probable glycine cleavage system H protein 3 (136 aa).

Positions 28–109 (MVTVGITSLG…PYDAWIVKIK (82 aa)) constitute a Lipoyl-binding domain. The residue at position 69 (Lys69) is an N6-lipoyllysine.

It belongs to the GcvH family. In terms of assembly, the glycine cleavage system is composed of four proteins: P, T, L and H. It depends on (R)-lipoate as a cofactor.

In terms of biological role, the glycine cleavage system catalyzes the degradation of glycine. The H protein shuttles the methylamine group of glycine from the P protein to the T protein. The chain is Probable glycine cleavage system H protein 3 from Sulfurisphaera tokodaii (strain DSM 16993 / JCM 10545 / NBRC 100140 / 7) (Sulfolobus tokodaii).